A 156-amino-acid chain; its full sequence is Probable chemoreceptor glutamine deamidase CheD (156 aa).

The protein belongs to the CheD family.

It catalyses the reaction L-glutaminyl-[protein] + H2O = L-glutamyl-[protein] + NH4(+). Probably deamidates glutamine residues to glutamate on methyl-accepting chemotaxis receptors (MCPs), playing an important role in chemotaxis. This is Probable chemoreceptor glutamine deamidase CheD from Sulfurimonas denitrificans (strain ATCC 33889 / DSM 1251) (Thiomicrospira denitrificans (strain ATCC 33889 / DSM 1251)).